We begin with the raw amino-acid sequence, 406 residues long: Vitamin D3 dihydroxylase (406 aa).

Over residues 1 to 15 (MTDTATTPQTTDAPA) the composition is skewed to low complexity. The tract at residues 1–24 (MTDTATTPQTTDAPAFPSNRSCPY) is disordered. Thr-81 serves as a coordination point for calciol. 2 residues coordinate heme: His-103 and Arg-107. Calciol is bound by residues Arg-193, Ser-236, and Ile-293. The heme site is built by Arg-297, His-353, and Cys-355.

It belongs to the cytochrome P450 family. Requires heme as cofactor.

The protein localises to the cytoplasm. The catalysed reaction is calciol + 2 reduced [2Fe-2S]-[ferredoxin] + O2 + 2 H(+) = calcidiol + 2 oxidized [2Fe-2S]-[ferredoxin] + H2O. It carries out the reaction calcidiol + 2 reduced [2Fe-2S]-[ferredoxin] + O2 + 2 H(+) = calcitriol + 2 oxidized [2Fe-2S]-[ferredoxin] + H2O. In terms of biological role, involved in the metabolism of vitamin D3 (calciol) and of a number of sulfonylurea herbicides. Catalyzes the two-step hydroxylation (25- and 1-alpha-hydroxylation) of vitamin D3 (VD3) to yield its active form 1-alpha,25-dihydroxyvitamin D3 (calcitriol). The first step is the hydroxylation of the C-25 position of VD3 to produce 25-hydroxyvitamin D3 (calcidiol). The second reaction is the hydroxylation of the C1-alpha-position of calcidiol to produce calcitriol. It can also hydroxylate vitamin D2. This chain is Vitamin D3 dihydroxylase, found in Streptomyces griseolus.